Consider the following 129-residue polypeptide: Small ribosomal subunit protein uS8 (129 aa).

It belongs to the universal ribosomal protein uS8 family. In terms of assembly, part of the 30S ribosomal subunit. Contacts proteins S5 and S12.

In terms of biological role, one of the primary rRNA binding proteins, it binds directly to 16S rRNA central domain where it helps coordinate assembly of the platform of the 30S subunit. The polypeptide is Small ribosomal subunit protein uS8 (Mycoplasma mycoides subsp. mycoides SC (strain CCUG 32753 / NCTC 10114 / PG1)).